We begin with the raw amino-acid sequence, 137 residues long: Endoribonuclease YbeY (137 aa).

Zn(2+)-binding residues include H105, H109, and D115.

It belongs to the endoribonuclease YbeY family. Requires Zn(2+) as cofactor.

The protein resides in the cytoplasm. Its function is as follows. Single strand-specific metallo-endoribonuclease involved in late-stage 70S ribosome quality control and in maturation of the 3' terminus of the 16S rRNA. This chain is Endoribonuclease YbeY, found in Chlorobium luteolum (strain DSM 273 / BCRC 81028 / 2530) (Pelodictyon luteolum).